Here is a 358-residue protein sequence, read N- to C-terminus: Acetylxylan esterase / glucomannan deacetylase (358 aa).

A signal peptide spans 1 to 18 (MKLLFPILLLTGSYFLSA). Cys-19 is lipidated: N-palmitoyl cysteine. A lipid anchor (S-diacylglycerol cysteine) is attached at Cys-19. Ser-160 (nucleophile) is an active-site residue. Residues Asp-333 and His-335 each act as charge relay system in the active site.

The protein belongs to the carbohydrate esterase 2 (CE2) family.

The protein resides in the cell membrane. It catalyses the reaction Deacetylation of xylans and xylo-oligosaccharides.. The protein operates within glycan degradation; xylan degradation. Involved in the degradation of plant cell wall polysaccharides. Catalyzes the deacetylation of acetylated birchwood xylan and glucomannan, with equal efficiency, and of the synthetic substrate 4-nitrophenyl acetate (4-NPAc). Does not bind cellulose, cellohexaose and beta-glucan. The chain is Acetylxylan esterase / glucomannan deacetylase from Cellvibrio japonicus (strain Ueda107) (Pseudomonas fluorescens subsp. cellulosa).